We begin with the raw amino-acid sequence, 262 residues long: Small ribosomal subunit protein eS4 (262 aa).

The S4 RNA-binding domain occupies 42–104; the sequence is LPLILILRNR…TNEDFRLLYD (63 aa).

It belongs to the eukaryotic ribosomal protein eS4 family.

The protein resides in the cytoplasm. The polypeptide is Small ribosomal subunit protein eS4 (RPS4) (Gossypium hirsutum (Upland cotton)).